The chain runs to 188 residues: RNA 2',3'-cyclic phosphodiesterase (188 aa).

H42 (proton donor) is an active-site residue. 2 consecutive short sequence motifs (HXTX) follow at residues 42–45 (HMTL) and 130–133 (HVTI). H130 serves as the catalytic Proton acceptor.

This sequence belongs to the 2H phosphoesterase superfamily. ThpR family.

The catalysed reaction is a 3'-end 2',3'-cyclophospho-ribonucleotide-RNA + H2O = a 3'-end 2'-phospho-ribonucleotide-RNA + H(+). Functionally, hydrolyzes RNA 2',3'-cyclic phosphodiester to an RNA 2'-phosphomonoester. The chain is RNA 2',3'-cyclic phosphodiesterase from Aquifex aeolicus (strain VF5).